Here is a 281-residue protein sequence, read N- to C-terminus: DSC E3 ubiquitin ligase complex subunit 4 (281 aa).

The next 4 membrane-spanning stretches (helical) occupy residues 22 to 42 (LCYAIIAQQYFQDPTVLLLLL), 62 to 82 (LPLFYPLLLNFLISLMVRMFF), 84 to 104 (LPTAGESLDGYLYGGSIINFI), and 115 to 135 (FITSDLVLFCLQIFMALILIA). Residues 145-154 (HIQASQSGLS) show a composition bias toward polar residues. Disordered regions lie at residues 145–183 (HIQASQSGLSNVDGDEEPSDLITEDSRDTQQGQRQEDLQ) and 256–281 (NTNSINNSPLSSNTTGVPNSVLTNPI). Positions 157 to 167 (DGDEEPSDLIT) are enriched in acidic residues. Basic and acidic residues predominate over residues 168 to 183 (EDSRDTQQGQRQEDLQ).

Component of the DSC E3 ubiquitin ligase complex composed of dsc1, dsc2, dsc3 and dsc4.

The protein resides in the endoplasmic reticulum membrane. The protein localises to the golgi apparatus membrane. It participates in protein modification; protein ubiquitination. Functionally, component of the DSC E3 ubiquitin ligase complex which is required for the sre1 transcriptional activator proteolytic cleavage to release the soluble transcription factor from the membrane in low oxygen or sterol conditions. The complex also plays an important role in the multivesicular body (MVB) pathway and functions in a post-endoplasmic reticulum pathway for protein degradation. This chain is DSC E3 ubiquitin ligase complex subunit 4 (dsc4), found in Schizosaccharomyces pombe (strain 972 / ATCC 24843) (Fission yeast).